An 877-amino-acid chain; its full sequence is Clumping factor B (877 aa).

The first 44 residues, 1–44 (MKKRIDYLSNKQNKYSIRRFTVGTTSVIVGATILFGIGNHQAQA), serve as a signal peptide directing secretion. A YSIRK-G/S signaling motif motif is present at residues 15-26 (YSIRRFTVGTTS). Composition is skewed to polar residues over residues 44–61 (ASEQSNDTTQSSKNNASA) and 68–95 (MIETPQLNTTANDTSDISANTNSANVDS). The disordered stretch occupies residues 44 to 192 (ASEQSNDTTQ…QGTSKPSVRT (149 aa)). The interval 45–542 (SEQSNDTTQS…GSADGDSAVN (498 aa)) is ligand binding A region. Over residues 96 to 119 (TTKPMSTQTSNTTTTEPASTNETP) the composition is skewed to low complexity. Residues 120-189 (QPTAIKNQAT…SNAQGTSKPS (70 aa)) show a composition bias toward polar residues. An MIDAS-like motif motif is present at residues 272–276 (DYSNS). The segment at 530 to 849 (YGGGSADGDS…ETGDKSENTN (320 aa)) is disordered. Over residues 545–555 (DPTPGPPVDPE) the composition is skewed to pro residues. Residues 556 to 801 (PSPDPEPEPT…SDSDSDSDSD (246 aa)) show a composition bias toward acidic residues. Residues 805–816 (RVTPPNNEQKAP) show a composition bias toward polar residues. Over residues 833–846 (HKTDALPETGDKSE) the composition is skewed to basic and acidic residues. The short motif at 838 to 842 (LPETG) is the LPXTG sorting signal element. T841 carries the post-translational modification Pentaglycyl murein peptidoglycan amidated threonine. Residues 842-877 (GDKSENTNATLFGAMMALLGSLLLFRKRKQDHKEKA) constitute a propeptide, removed by sortase.

The protein belongs to the serine-aspartate repeat-containing protein (SDr) family. In terms of processing, proteolytically cleaved by aureolysin (aur). This cleavage leads to the inactivation of ClfB.

It localises to the secreted. The protein localises to the cell wall. In terms of biological role, cell surface-associated protein implicated in virulence by promoting bacterial attachment to both alpha- and beta-chains of human fibrinogen and inducing the formation of bacterial clumps. Partly responsible for mediating bacterial attachment to the highly keratinized squamous epithelial cells from the nasal cavity via an interaction with cytokeratin K10 (K10). Also promotes bacterial attachment to cultured keratinocytes, possibly through an interaction with cytokeratin K10. Binds mouse cytokeratin K10. Activates human platelet aggregation. The polypeptide is Clumping factor B (clfB) (Staphylococcus aureus (strain NCTC 8325 / PS 47)).